The chain runs to 363 residues: DNA replication and repair protein RecF (363 aa).

30 to 37 (GPNGSGKT) is a binding site for ATP.

Belongs to the RecF family.

It is found in the cytoplasm. The RecF protein is involved in DNA metabolism; it is required for DNA replication and normal SOS inducibility. RecF binds preferentially to single-stranded, linear DNA. It also seems to bind ATP. The sequence is that of DNA replication and repair protein RecF from Chlorobium limicola (strain DSM 245 / NBRC 103803 / 6330).